We begin with the raw amino-acid sequence, 162 residues long: Proepiregulin (162 aa).

The first 22 residues, 1–22 (METFPAAWVLALLCLGSHLLQA), serve as a signal peptide directing secretion. A propeptide spanning residues 23-55 (VISTTVIPSCIPEESEDNCTALVQMEDDPRVAQ) is cleaved from the precursor. An N-linked (GlcNAc...) asparagine glycan is attached at Asn40. In terms of domain architecture, EGF-like spans 57 to 97 (LITKCSSDMDGYCLHGHCIYLVDMSEKYCRCEVGYTGLRCE). 3 cysteine pairs are disulfide-bonded: Cys61/Cys74, Cys69/Cys85, and Cys87/Cys96. Residues 102–162 (TVHQPLSREY…TSGGPGLPQV (61 aa)) constitute a propeptide, removed in mature form. The helical transmembrane segment at 113-133 (ALTVILVFLFLIVTAGSMYYF) threads the bilayer.

In terms of assembly, interacts with EGFR and ERBB4.

It localises to the secreted. It is found in the extracellular space. The protein localises to the cell membrane. Functionally, ligand of the EGF receptor/EGFR and ERBB4. Stimulates EGFR and ERBB4 tyrosine phosphorylation. Contributes to inflammation, wound healing, tissue repair, and oocyte maturation by regulating angiogenesis and vascular remodeling and by stimulating cell proliferation. The chain is Proepiregulin (Ereg) from Rattus norvegicus (Rat).